The sequence spans 292 residues: Release factor glutamine methyltransferase (292 aa).

S-adenosyl-L-methionine is bound by residues glycine 126–glycine 130, aspartate 157, tryptophan 184, and asparagine 198. Residue asparagine 198–tyrosine 201 participates in substrate binding.

It belongs to the protein N5-glutamine methyltransferase family. PrmC subfamily.

It catalyses the reaction L-glutaminyl-[peptide chain release factor] + S-adenosyl-L-methionine = N(5)-methyl-L-glutaminyl-[peptide chain release factor] + S-adenosyl-L-homocysteine + H(+). In terms of biological role, methylates the class 1 translation termination release factors RF1/PrfA and RF2/PrfB on the glutamine residue of the universally conserved GGQ motif. The sequence is that of Release factor glutamine methyltransferase from Haemophilus influenzae (strain ATCC 51907 / DSM 11121 / KW20 / Rd).